The following is a 121-amino-acid chain: Basic phospholipase A2 (121 aa).

7 disulfide bridges follow: cysteine 26-cysteine 114, cysteine 28-cysteine 44, cysteine 43-cysteine 94, cysteine 49-cysteine 121, cysteine 50-cysteine 87, cysteine 57-cysteine 80, and cysteine 74-cysteine 85. Ca(2+) contacts are provided by tyrosine 27, glycine 29, and glycine 31. Histidine 47 is an active-site residue. Residue aspartate 48 participates in Ca(2+) binding. The active site involves aspartate 88.

Homopentamer. Requires Ca(2+) as cofactor. As to expression, expressed by the venom gland.

The protein localises to the secreted. It catalyses the reaction a 1,2-diacyl-sn-glycero-3-phosphocholine + H2O = a 1-acyl-sn-glycero-3-phosphocholine + a fatty acid + H(+). Functionally, snake venom phospholipase A2 (PLA2) that displays moderate myotoxic activity in vivo, and cytotoxic activity in vitro. In vitro, shows anticoagulant activity on human plasma and in mice causes inflammatory cell infiltration and myonecrosis in the gastrocnemius muscles of CD-1 mice 3 hours after injection (100 ug). PLA2 catalyzes the calcium-dependent hydrolysis of the 2-acyl groups in 3-sn-phosphoglycerides. The chain is Basic phospholipase A2 from Porthidium ophryomegas (Slender hognose viper).